The following is a 182-amino-acid chain: Ribulose bisphosphate carboxylase small subunit, chloroplastic 1 (182 aa).

A chloroplast-targeting transit peptide spans 1–42; sequence MASIMMNKSVVLSKECAKPLATPKVTLNKRGFATTIATKNRE.

This sequence belongs to the RuBisCO small chain family. In terms of assembly, heterohexadecamer of 8 large and 8 small subunits.

Its subcellular location is the plastid. The protein localises to the chloroplast. RuBisCO catalyzes two reactions: the carboxylation of D-ribulose 1,5-bisphosphate, the primary event in carbon dioxide fixation, as well as the oxidative fragmentation of the pentose substrate. Both reactions occur simultaneously and in competition at the same active site. Although the small subunit is not catalytic it is essential for maximal activity. The sequence is that of Ribulose bisphosphate carboxylase small subunit, chloroplastic 1 from Acetabularia acetabulum (Mermaid's wine glass).